Reading from the N-terminus, the 630-residue chain is NUAK family SNF1-like kinase 2 (630 aa).

At Met1 the chain carries N-acetylmethionine. Residues 57 to 307 (YEFLETLGKG…LEDVASHWWV (251 aa)) enclose the Protein kinase domain. Residues 63–71 (LGKGTYGKV) and Lys85 contribute to the ATP site. The active-site Proton acceptor is the Asp179. Thr212 carries the post-translational modification Phosphothreonine. Disordered stretches follow at residues 361–504 (HVPG…RLHR) and 521–566 (GTAP…LDLP). Positions 464–476 (SGYYSSPEPSESG) are enriched in low complexity. Residues Ser529, Ser550, Ser553, and Ser579 each carry the phosphoserine modification.

This sequence belongs to the protein kinase superfamily. CAMK Ser/Thr protein kinase family. SNF1 subfamily. Mg(2+) serves as cofactor. Phosphorylated at Thr-212 by STK11/LKB1 in complex with STE20-related adapter-alpha (STRADA) pseudo kinase and CAB39. Autophosphorylation is also possible at Thr-212. As to expression, expressed in liver, skin, testis, uterus, ovary, adrenal gland and brain (at protein level). Expressed in kidney, heart, skin, spleen, lung, uterus, liver and the exocrine and endocrine compartments of the human pancreas. A kinase-inactive isoform also appears to be expressed in the skin, spleen, lung, uterus, liver and testis.

It carries out the reaction L-seryl-[protein] + ATP = O-phospho-L-seryl-[protein] + ADP + H(+). The catalysed reaction is L-threonyl-[protein] + ATP = O-phospho-L-threonyl-[protein] + ADP + H(+). With respect to regulation, activated by phosphorylation on Thr-212 by STK11 in complex with STE20-related adapter-alpha (STRAD alpha) pseudo kinase and CAB39. In terms of biological role, stress-activated kinase involved in tolerance to glucose starvation. Induces cell-cell detachment by increasing F-actin conversion to G-actin. Expression is induced by CD95 or TNF-alpha, via NF-kappa-B. Protects cells from CD95-mediated apoptosis and is required for the increased motility and invasiveness of CD95-activated tumor cells. Phosphorylates LATS1 and LATS2. Plays a key role in neural tube closure during embryonic development through LATS2 phosphorylation and regulation of the nuclear localization of YAP1 a critical downstream regulatory target in the Hippo signaling pathway. The polypeptide is NUAK family SNF1-like kinase 2 (Rattus norvegicus (Rat)).